The sequence spans 601 residues: Probable serine/threonine-protein kinase WNK3 (601 aa).

Positions 34–291 (GRFNEILGKG…ARELLDDPFL (258 aa)) constitute a Protein kinase domain. Residues 114-117 (TELF) and K164 contribute to the ATP site. D181 acts as the Proton acceptor in catalysis. Disordered stretches follow at residues 470-498 (GWRPGPATDDDDDDDLVGGGDDPDAPGGA) and 551-601 (ADDD…SEQP). Acidic residues predominate over residues 477-493 (TDDDDDDDLVGGGDDPD). Over residues 560–571 (LQGSSSDTGGSN) the composition is skewed to polar residues. Residues 572 to 583 (HEQHAMGKDKEV) show a composition bias toward basic and acidic residues.

Belongs to the protein kinase superfamily. Ser/Thr protein kinase family. WNK subfamily.

It carries out the reaction L-seryl-[protein] + ATP = O-phospho-L-seryl-[protein] + ADP + H(+). The catalysed reaction is L-threonyl-[protein] + ATP = O-phospho-L-threonyl-[protein] + ADP + H(+). The sequence is that of Probable serine/threonine-protein kinase WNK3 (WNK3) from Oryza sativa subsp. japonica (Rice).